The chain runs to 874 residues: Bifunctional uridylyltransferase/uridylyl-removing enzyme (874 aa).

The tract at residues 1–332 is uridylyltransferase; that stretch reads MPLQSPLTFS…NGGATENAEI (332 aa). Residues 333 to 692 form a uridylyl-removing region; that stretch reads LDADFQRRGS…ISKKATRGGT (360 aa). Positions 451-573 constitute an HD domain; the sequence is VDEHSIRLLK…VRDEESLEYL (123 aa). ACT domains are found at residues 693–777 and 800–874; these read EVFV…RTPN and LMEF…AVTA.

This sequence belongs to the GlnD family. Requires Mg(2+) as cofactor.

The enzyme catalyses [protein-PII]-L-tyrosine + UTP = [protein-PII]-uridylyl-L-tyrosine + diphosphate. The catalysed reaction is [protein-PII]-uridylyl-L-tyrosine + H2O = [protein-PII]-L-tyrosine + UMP + H(+). Its activity is regulated as follows. Uridylyltransferase (UTase) activity is inhibited by glutamine, while glutamine activates uridylyl-removing (UR) activity. Its function is as follows. Modifies, by uridylylation and deuridylylation, the PII regulatory proteins (GlnB and homologs), in response to the nitrogen status of the cell that GlnD senses through the glutamine level. Under low glutamine levels, catalyzes the conversion of the PII proteins and UTP to PII-UMP and PPi, while under higher glutamine levels, GlnD hydrolyzes PII-UMP to PII and UMP (deuridylylation). Thus, controls uridylylation state and activity of the PII proteins, and plays an important role in the regulation of nitrogen assimilation and metabolism. This Vibrio parahaemolyticus serotype O3:K6 (strain RIMD 2210633) protein is Bifunctional uridylyltransferase/uridylyl-removing enzyme.